A 61-amino-acid chain; its full sequence is Small ribosomal subunit protein uS14 (61 aa).

Residues Cys24, Cys27, Cys40, and Cys43 each contribute to the Zn(2+) site.

This sequence belongs to the universal ribosomal protein uS14 family. Zinc-binding uS14 subfamily. Part of the 30S ribosomal subunit. Contacts proteins S3 and S10. Zn(2+) is required as a cofactor.

Binds 16S rRNA, required for the assembly of 30S particles and may also be responsible for determining the conformation of the 16S rRNA at the A site. The polypeptide is Small ribosomal subunit protein uS14 (Clostridium perfringens (strain ATCC 13124 / DSM 756 / JCM 1290 / NCIMB 6125 / NCTC 8237 / Type A)).